The primary structure comprises 32 residues: Secreted protein F2 (32 aa).

It is found in the secreted. In Globisporangium hypogynum (Pythium hypogynum), this protein is Secreted protein F2.